The sequence spans 284 residues: MSEERRMRIGVVGYGHIGKYLVDKIVREGANHSMELAFVWNRRREKLSGAVDPRLQLQDLSDCQKWAADLIVEVAHPCITREYGEKFLSVAHFLVGSPTALADTVTEAKLRERARLSGNTLYVPCGALWGAEDIFKMAERGTLKALRITMTKHPNSFKLEGDLVQKNQEAMSNRTVLYEGPVRGLCPLAPNNVNTMAAACMAAHTLGFDGVVGVLVSDPSVPDWHFVDIEVTGGTIEKTGQVFSVKTSRRNPAAPCSVTGSATFASFWSSLLACKGHGGRVYIC.

Belongs to the L-aspartate dehydrogenase family.

The protein is Aspartate dehydrogenase domain-containing protein (aspdh) of Xenopus tropicalis (Western clawed frog).